The chain runs to 587 residues: Aspartate--tRNA ligase (587 aa).

An L-aspartate-binding site is contributed by Glu-174. The interval 198–201 is aspartate; that stretch reads QITK. Arg-220 is a binding site for L-aspartate. Residues 220-222 and Gln-229 contribute to the ATP site; that span reads RDE. Residue His-443 participates in L-aspartate binding. An ATP-binding site is contributed by Glu-477. Arg-484 lines the L-aspartate pocket. ATP is bound at residue 529–532; that stretch reads GLDR.

Belongs to the class-II aminoacyl-tRNA synthetase family. Type 1 subfamily. In terms of assembly, homodimer.

It is found in the cytoplasm. It carries out the reaction tRNA(Asp) + L-aspartate + ATP = L-aspartyl-tRNA(Asp) + AMP + diphosphate. Its function is as follows. Catalyzes the attachment of L-aspartate to tRNA(Asp) in a two-step reaction: L-aspartate is first activated by ATP to form Asp-AMP and then transferred to the acceptor end of tRNA(Asp). The polypeptide is Aspartate--tRNA ligase (Streptococcus pneumoniae serotype 4 (strain ATCC BAA-334 / TIGR4)).